The chain runs to 210 residues: Large ribosomal subunit protein uL3 (210 aa).

Residues 126 to 150 (VSATHGSHRNHRKPGSVGASSTPSR) form a disordered region.

It belongs to the universal ribosomal protein uL3 family. In terms of assembly, part of the 50S ribosomal subunit. Forms a cluster with proteins L14 and L19.

In terms of biological role, one of the primary rRNA binding proteins, it binds directly near the 3'-end of the 23S rRNA, where it nucleates assembly of the 50S subunit. This is Large ribosomal subunit protein uL3 from Tropheryma whipplei (strain TW08/27) (Whipple's bacillus).